The following is a 327-amino-acid chain: L-lactate dehydrogenase (327 aa).

Residues Val18, Asp39, Lys44, Tyr69, and 83–84 (GA) contribute to the NAD(+) site. Substrate is bound by residues Gln86, Arg92, and 124–127 (NPVD). NAD(+) contacts are provided by residues 122–124 (AAN) and Ser147. Position 152–155 (152–155 (DSAR)) interacts with substrate. Beta-D-fructose 1,6-bisphosphate-binding residues include Arg157 and His172. His179 (proton acceptor) is an active-site residue. A Phosphotyrosine modification is found at Tyr224. Thr233 lines the substrate pocket.

This sequence belongs to the LDH/MDH superfamily. LDH family. As to quaternary structure, homotetramer.

Its subcellular location is the cytoplasm. The enzyme catalyses (S)-lactate + NAD(+) = pyruvate + NADH + H(+). It participates in fermentation; pyruvate fermentation to lactate; (S)-lactate from pyruvate: step 1/1. Its activity is regulated as follows. Allosterically activated by fructose 1,6-bisphosphate (FBP). In terms of biological role, catalyzes the conversion of lactate to pyruvate. This chain is L-lactate dehydrogenase, found in Streptococcus equi subsp. zooepidemicus (strain H70).